The chain runs to 304 residues: D-alanine--D-alanine ligase (304 aa).

The 197-residue stretch at Lys103–Lys299 folds into the ATP-grasp domain. ATP is bound at residue Glu129–Ser184. Residues Asp253, Glu266, and Asn268 each contribute to the Mg(2+) site.

This sequence belongs to the D-alanine--D-alanine ligase family. Mg(2+) serves as cofactor. Requires Mn(2+) as cofactor.

Its subcellular location is the cytoplasm. It catalyses the reaction 2 D-alanine + ATP = D-alanyl-D-alanine + ADP + phosphate + H(+). The protein operates within cell wall biogenesis; peptidoglycan biosynthesis. Cell wall formation. In Neisseria meningitidis serogroup B (strain ATCC BAA-335 / MC58), this protein is D-alanine--D-alanine ligase.